Reading from the N-terminus, the 448-residue chain is UPF0053 protein sll0260 (448 aa).

One can recognise a CNNM transmembrane domain in the interval 2–203; it reads FSSSVELELF…AQAGMIDEAE (202 aa). Transmembrane regions (helical) follow at residues 11 to 31, 62 to 82, 106 to 126, and 142 to 162; these read FFIF…IAIV, FLSA…AVGG, LSIS…GELV, and VAPA…LLGV. 2 consecutive CBS domains span residues 222 to 281 and 286 to 345; these read MTPR…GQKI and IVQP…NDDE.

This sequence belongs to the UPF0053 family.

It localises to the cell membrane. The protein is UPF0053 protein sll0260 of Synechocystis sp. (strain ATCC 27184 / PCC 6803 / Kazusa).